The primary structure comprises 126 residues: Late histone H2A.L3 (126 aa).

The disordered stretch occupies residues 1 to 20 (MSGRGKGAGKARAKAKSRSA). Residue Ser-2 is modified to N-acetylserine. At Ser-2 the chain carries Phosphoserine. The segment covering 7–19 (GAGKARAKAKSRS) has biased composition (basic residues). Gln-105 carries the N5-methylglutamine modification. A Glycyl lysine isopeptide (Lys-Gly) (interchain with G-Cter in ubiquitin) cross-link involves residue Lys-120.

The protein belongs to the histone H2A family. The nucleosome is a histone octamer containing two molecules each of H2A, H2B, H3 and H4 assembled in one H3-H4 heterotetramer and two H2A-H2B heterodimers. The octamer wraps approximately 147 bp of DNA. Post-translationally, monoubiquitination of Lys-120 gives a specific tag for epigenetic transcriptional repression. Phosphorylation of Ser-2 directly represses transcription.

Its subcellular location is the nucleus. The protein resides in the chromosome. Its function is as follows. Core component of nucleosome. Nucleosomes wrap and compact DNA into chromatin, limiting DNA accessibility to the cellular machineries which require DNA as a template. Histones thereby play a central role in transcription regulation, DNA repair, DNA replication and chromosomal stability. DNA accessibility is regulated via a complex set of post-translational modifications of histones, also called histone code, and nucleosome remodeling. The polypeptide is Late histone H2A.L3 (Strongylocentrotus purpuratus (Purple sea urchin)).